We begin with the raw amino-acid sequence, 219 residues long: Histone H1.01 (219 aa).

Low complexity-rich tracts occupy residues 1 to 19 (MSETAPAAAPDAPAPGAKA) and 27 to 39 (AAGGAKARKPAGP). Disordered stretches follow at residues 1 to 40 (MSETAPAAAPDAPAPGAKAAAKKPKKAAGGAKARKPAGPS) and 94 to 219 (LVQT…AKKK). The residue at position 2 (S2) is an N-acetylserine. The 74-residue stretch at 37-110 (AGPSVTELIT…GASGSFRLNK (74 aa)) folds into the H15 domain. Composition is skewed to basic residues over residues 119-134 (APRKRATAAKPKKPAA), 142-159 (KKPKKAAAVKKSPKKAKK), 167-185 (KAAKSPKKAAKAGRPKKAA), and 192-219 (KAVKPKAAKPKATKPKAAKAKKTAAKKK).

This sequence belongs to the histone H1/H5 family.

The protein localises to the nucleus. The protein resides in the chromosome. Histones H1 are necessary for the condensation of nucleosome chains into higher-order structures. The polypeptide is Histone H1.01 (Gallus gallus (Chicken)).